Consider the following 404-residue polypeptide: Agnestins biosynthesis cluster transcription factor AgnL10 (404 aa).

Positions cysteine 23–cysteine 50 form a DNA-binding region, zn(2)-C6 fungal-type. 3 disordered regions span residues alanine 54–alanine 83, alanine 188–glycine 209, and proline 294–aspartate 318. The segment covering arginine 57–asparagine 68 has biased composition (basic residues). The span at proline 74–alanine 83 shows a compositional bias: polar residues. Residues alanine 188–alanine 197 are compositionally biased toward low complexity.

It is found in the nucleus. Functionally, transcription factor that regulates the expression of the gene cluster that mediates the biosynthesis of agnestins, dihydroxy-xanthone metabolites. In Paecilomyces divaricatus (Penicillium divaricatum), this protein is Agnestins biosynthesis cluster transcription factor AgnL10.